The primary structure comprises 185 residues: Large ribosomal subunit protein eL19 (185 aa).

Residues 152–185 form a disordered region; sequence SDKLTSQQEARRAKNTASRAKRNEKAQIVAKVDV.

It belongs to the eukaryotic ribosomal protein eL19 family.

This Tetrahymena thermophila (strain SB210) protein is Large ribosomal subunit protein eL19 (RPL19).